The chain runs to 92 residues: Small ribosomal subunit protein uS19 (92 aa).

This sequence belongs to the universal ribosomal protein uS19 family.

Protein S19 forms a complex with S13 that binds strongly to the 16S ribosomal RNA. The protein is Small ribosomal subunit protein uS19 of Brucella ovis (strain ATCC 25840 / 63/290 / NCTC 10512).